The sequence spans 2435 residues: ATP-binding cassette sub-family A member 2 (2435 aa).

The N-linked (GlcNAc...) asparagine glycan is linked to Asn14. 2 helical membrane passes run 22 to 42 and 54 to 74; these read PWVLAFEIFIPLVLFFILLGL and AFYTAAPLTSAGILPVMQSLC. N-linked (GlcNAc...) asparagine glycans are attached at residues Asn89, Asn168, and Asn173. At Gln271 the chain carries N5-methylglutamine. Residues Asn305, Asn368, Asn379, Asn420, Asn432, Asn476, Asn484, Asn494, Asn530, Asn544, Asn590, Asn600, and Asn628 are each glycosylated (N-linked (GlcNAc...) asparagine). The next 6 helical transmembrane spans lie at 699–719, 750–770, 782–802, 813–833, 857–877, and 893–913; these read FLFVIEHMMPLCMVISWVYSV, VAWFITGFVQLSISVTALTAI, VVIIWLFLAVYAVATIMFCFL, ASACGGIIYFLSYVPYMYVAI, AFGLGSKYFALYEVAGVGIQW, and LLAVTMLMVDAVVYGILTWYI. In terms of domain architecture, ABC transporter 1 spans 990–1221; the sequence is VCVDKLTKVY…YGDGYRLTLV (232 aa). 1024 to 1031 is an ATP binding site; the sequence is GHNGAGKT. Disordered stretches follow at residues 1223 to 1243 and 1325 to 1357; these read RPAEPGGPQEPGLASSPPGRA and DQSLENSEADVKESRKDVLPGAEGPASGEGHAG. Phosphoserine occurs at positions 1238, 1327, and 1331. A compositionally biased stretch (basic and acidic residues) spans 1333 to 1342; it reads ADVKESRKDV. A glycan (N-linked (GlcNAc...) asparagine) is linked at Asn1408. Residues 1456-1476 form a helical membrane-spanning segment; that stretch reads ALFSQILLPAFFVCVAMTVAL. Asn1496, Asn1549, and Asn1557 each carry an N-linked (GlcNAc...) asparagine glycan. The tract at residues 1586 to 1610 is disordered; sequence SNFVPPPPSPAPSDSPASPDEDLQA. Pro residues predominate over residues 1589–1598; that stretch reads VPPPPSPAPS. Residues Asn1612, Asn1677, and Asn1775 are each glycosylated (N-linked (GlcNAc...) asparagine). Helical transmembrane passes span 1792 to 1812, 1841 to 1861, 1872 to 1892, 1905 to 1925, and 1991 to 2011; these read VVIAIFIIVAMSFVPASFVVF, VWDMLNYLVPATCCVIILFVF, FPAVLSLFLLYGWSITPIMYP, VFLIVINLFIGITATVATFLL, and GLVAMAVEGVVGFLLTIMCQY. The region spanning 2050 to 2285 is the ABC transporter 2 domain; that stretch reads VKIENLTKVY…FGDGYMITVR (236 aa). A glycan (N-linked (GlcNAc...) asparagine) is linked at Asn2054. 2087-2094 is a binding site for ATP; the sequence is GVNGAGKT. Phosphothreonine is present on Thr2412.

The protein belongs to the ABC transporter superfamily. ABCA family. Post-translationally, methylated at Gln-271 by N6AMT1. As to expression, highly expressed in the brain,peripheral blood leukocytes and ovary, whereas lower levels of expression is observed in kidney and liver. In terms of tissue distribution, weakly expressed in brain and highly in peripheral blood leukocytes.

It localises to the endosome membrane. The protein resides in the lysosome membrane. Probable lipid transporter that modulates cholesterol sequestration in the late endosome/lysosome by regulating the intracellular sphingolipid metabolism, in turn participates in cholesterol homeostasis. May alter the transbilayer distribution of ceramide in the intraluminal membrane lipid bilayer, favoring its retention in the outer leaflet that results in increased acid ceramidase activity in the late endosome/lysosome, facilitating ceramide deacylation to sphingosine leading to the sequestration of free cholesterol in lysosomes. In addition regulates amyloid-beta production either by activating a signaling pathway that regulates amyloid precursor protein transcription through the modulation of sphingolipid metabolism or through its role in gamma-secretase processing of APP. May play a role in myelin formation. The protein is ATP-binding cassette sub-family A member 2 of Homo sapiens (Human).